The chain runs to 142 residues: gSG7 salivary protein (142 aa).

An N-terminal signal peptide occupies residues M1–A25. 2 disulfide bridges follow: C83-C138 and C106-C116.

In terms of assembly, interacts with host coagulation factor XII (F12) (inactive and activated). Interacts with host high molecular weight kininogen (KNG1) (inactive and activated).

It is found in the secreted. With respect to regulation, zn(2+) modulates binding to host coagulation factor XII (F12) and high molecular weight kininogen (KNG1). Functionally, salivary protein with anticoagulant activity. Inhibits activation of host kallikrein-kinin system by preventing the reciprocal activation of coagulation factor XII (F12) and prekallikrein (KLKB1), and subsequent release of bradykinin. Inhibits host factor XII and high molecular weight kininogen (KNG1) binding to negatively charged surfaces. Weakly inhibits the alternative pathway of complement system activation in the host. The sequence is that of gSG7 salivary protein from Anopheles stephensi (Indo-Pakistan malaria mosquito).